The sequence spans 299 residues: Peroxisomal biogenesis factor 19 (299 aa).

Position 2 is an N-acetylalanine (alanine 2). Residues 2-56 (AAAEGGCGAGVEADRELEELLESALDDFDKAKPSPAPSPTISAPDASGPQKRSPG) are docking to the peroxisome membrane and binding to PEX3. Residues 2–91 (AAAEGGCGAG…QATAEFEKAM (90 aa)) are necessary for PEX19 function on peroxisome biogenesis. Positions 25–63 (ALDDFDKAKPSPAPSPTISAPDASGPQKRSPGDTAKDAL) are disordered. Serine 35, serine 39, serine 54, and serine 66 each carry phosphoserine. Residue threonine 236 is modified to Phosphothreonine. Residue cysteine 296 is modified to Cysteine methyl ester. Cysteine 296 carries the S-farnesyl cysteine lipid modification. Residues 297–299 (LIM) constitute a propeptide, removed in mature form.

This sequence belongs to the peroxin-19 family. Interacts with a broad range of peroxisomal membrane proteins, including PEX3, PEX10, PEX11A, PEX11B, PEX12, PEX13, PEX14 and PEX16, PXMP2/PMP22, PXMP4/PMP24, SLC25A17/PMP34, ABCD1/ALDP, ABCD2/ALDRP, and ABCD3/PMP70. Also interacts with the tumor suppressor CDKN2A/p19ARF.

It localises to the cytoplasm. Its subcellular location is the peroxisome membrane. Its function is as follows. Necessary for early peroxisomal biogenesis. Acts both as a cytosolic chaperone and as an import receptor for peroxisomal membrane proteins (PMPs). Binds and stabilizes newly synthesized PMPs in the cytoplasm by interacting with their hydrophobic membrane-spanning domains, and targets them to the peroxisome membrane by binding to the integral membrane protein PEX3. Excludes CDKN2A from the nucleus and prevents its interaction with MDM2, which results in active degradation of TP53. The sequence is that of Peroxisomal biogenesis factor 19 (Pex19) from Rattus norvegicus (Rat).